A 431-amino-acid polypeptide reads, in one-letter code: Light-independent protochlorophyllide reductase subunit N (431 aa).

The [4Fe-4S] cluster site is built by Cys29, Cys54, and Cys114.

It belongs to the BchN/ChlN family. In terms of assembly, protochlorophyllide reductase is composed of three subunits; ChlL, ChlN and ChlB. Forms a heterotetramer of two ChlB and two ChlN subunits. The cofactor is [4Fe-4S] cluster.

The protein localises to the plastid. The protein resides in the chloroplast. It catalyses the reaction chlorophyllide a + oxidized 2[4Fe-4S]-[ferredoxin] + 2 ADP + 2 phosphate = protochlorophyllide a + reduced 2[4Fe-4S]-[ferredoxin] + 2 ATP + 2 H2O. Its pathway is porphyrin-containing compound metabolism; chlorophyll biosynthesis (light-independent). Its function is as follows. Component of the dark-operative protochlorophyllide reductase (DPOR) that uses Mg-ATP and reduced ferredoxin to reduce ring D of protochlorophyllide (Pchlide) to form chlorophyllide a (Chlide). This reaction is light-independent. The NB-protein (ChlN-ChlB) is the catalytic component of the complex. This is Light-independent protochlorophyllide reductase subunit N from Nephroselmis olivacea (Green alga).